A 277-amino-acid polypeptide reads, in one-letter code: Putative phosphoenolpyruvate synthase regulatory protein (277 aa).

157-164 (GVSRCGKT) contributes to the ADP binding site.

This sequence belongs to the pyruvate, phosphate/water dikinase regulatory protein family. PSRP subfamily.

The enzyme catalyses [pyruvate, water dikinase] + ADP = [pyruvate, water dikinase]-phosphate + AMP + H(+). The catalysed reaction is [pyruvate, water dikinase]-phosphate + phosphate + H(+) = [pyruvate, water dikinase] + diphosphate. Functionally, bifunctional serine/threonine kinase and phosphorylase involved in the regulation of the phosphoenolpyruvate synthase (PEPS) by catalyzing its phosphorylation/dephosphorylation. This chain is Putative phosphoenolpyruvate synthase regulatory protein, found in Erwinia tasmaniensis (strain DSM 17950 / CFBP 7177 / CIP 109463 / NCPPB 4357 / Et1/99).